Consider the following 106-residue polypeptide: Large ribosomal subunit protein uL24 (106 aa).

The protein belongs to the universal ribosomal protein uL24 family. As to quaternary structure, part of the 50S ribosomal subunit.

Functionally, one of two assembly initiator proteins, it binds directly to the 5'-end of the 23S rRNA, where it nucleates assembly of the 50S subunit. In terms of biological role, one of the proteins that surrounds the polypeptide exit tunnel on the outside of the subunit. The protein is Large ribosomal subunit protein uL24 of Gluconobacter oxydans (strain 621H) (Gluconobacter suboxydans).